A 530-amino-acid chain; its full sequence is GMP synthase [glutamine-hydrolyzing] (530 aa).

A Glutamine amidotransferase type-1 domain is found at 4–205; sequence RILILDYGSQ…VREICGCEGD (202 aa). The active-site Nucleophile is the cysteine 84. Catalysis depends on residues histidine 179 and glutamate 181. The 193-residue stretch at 206 to 398 folds into the GMPS ATP-PPase domain; the sequence is WNMPDYISEA…LGLPPQMVYR (193 aa). 233–239 is a binding site for ATP; sequence SGGVDSS.

Homodimer.

The catalysed reaction is XMP + L-glutamine + ATP + H2O = GMP + L-glutamate + AMP + diphosphate + 2 H(+). It functions in the pathway purine metabolism; GMP biosynthesis; GMP from XMP (L-Gln route): step 1/1. Functionally, catalyzes the synthesis of GMP from XMP. The protein is GMP synthase [glutamine-hydrolyzing] of Bordetella avium (strain 197N).